Here is a 104-residue protein sequence, read N- to C-terminus: Large ribosomal subunit protein uL24 (104 aa).

Belongs to the universal ribosomal protein uL24 family. As to quaternary structure, part of the 50S ribosomal subunit.

Its function is as follows. One of two assembly initiator proteins, it binds directly to the 5'-end of the 23S rRNA, where it nucleates assembly of the 50S subunit. One of the proteins that surrounds the polypeptide exit tunnel on the outside of the subunit. The protein is Large ribosomal subunit protein uL24 of Rhodopseudomonas palustris (strain BisB18).